Here is a 100-residue protein sequence, read N- to C-terminus: uncharacterized protein (100 aa).

This is an uncharacterized protein from Mycoplasma pneumoniae (strain ATCC 29342 / M129 / Subtype 1) (Mycoplasmoides pneumoniae).